The chain runs to 500 residues: Cytochrome P450 71B34 (500 aa).

The helical transmembrane segment at 1–21 threads the bilayer; it reads MTNIWLLSLIFVICILVAVFN. Cys-440 is a binding site for heme.

This sequence belongs to the cytochrome P450 family. Heme is required as a cofactor.

It localises to the membrane. This is Cytochrome P450 71B34 (CYP71B34) from Arabidopsis thaliana (Mouse-ear cress).